The following is a 203-amino-acid chain: MFKKYDSKNSIVLKSILSLGIIYGGTFGIYPKADASTQNSSSVQDKQLQKVEEVPNNSEKALVKKLYDRYSKDTINGKSNKSRNWVYSERPLNENQVRIHLEGTYTVAGRVYTPKRNITLNKEVVTLKELDHIIRFAHISYGLYMGEHLPKGNIVINTKDGGKYTLESHKELQKDRENVKINTADIKNVTFKLVKSVNDIEQV.

It belongs to the staphylococcal/streptococcal toxin family.

It localises to the secreted. In terms of biological role, plays a role in the inhibition of the host innate immune system. Inhibits phagocytosis and killing by human neutrophils by interacting with multiple neutrophil surface glycoproteins in a sialic acid-dependent manner. The protein is Enterotoxin-like toxin X of Staphylococcus aureus (strain NCTC 8325 / PS 47).